The primary structure comprises 280 residues: Tryptophan synthase alpha chain (280 aa).

Active-site proton acceptor residues include Glu50 and Asp61.

It belongs to the TrpA family. As to quaternary structure, tetramer of two alpha and two beta chains.

The catalysed reaction is (1S,2R)-1-C-(indol-3-yl)glycerol 3-phosphate + L-serine = D-glyceraldehyde 3-phosphate + L-tryptophan + H2O. It functions in the pathway amino-acid biosynthesis; L-tryptophan biosynthesis; L-tryptophan from chorismate: step 5/5. Functionally, the alpha subunit is responsible for the aldol cleavage of indoleglycerol phosphate to indole and glyceraldehyde 3-phosphate. The polypeptide is Tryptophan synthase alpha chain (Methylorubrum extorquens (strain PA1) (Methylobacterium extorquens)).